The primary structure comprises 255 residues: Very-long-chain (3R)-3-hydroxyacyl-CoA dehydratase 2 (255 aa).

Residues 3 to 42 lie on the Cytoplasmic side of the membrane; the sequence is AAAAATAAAKGNGGGGGRAGAGDASGTRKKKGPGPLATAY. The disordered stretch occupies residues 11–34; sequence AKGNGGGGGRAGAGDASGTRKKKG. Residues 13–22 show a composition bias toward gly residues; the sequence is GNGGGGGRAG. A helical membrane pass occupies residues 43-61; it reads LVIYNVVMTAGWLVIAVGL. Over 62–80 the chain is Lumenal; it reads VRAYLAKGSYHSLYYSIEK. Residues 81–98 form a helical membrane-spanning segment; the sequence is PLKFFQTGALLEILHCAI. Over 99 to 108 the chain is Cytoplasmic; the sequence is GIVPSSVVLT. A helical membrane pass occupies residues 109-126; the sequence is SFQVMSRVFLIWAVTHSV. Topologically, residues 127–131 are lumenal; the sequence is KEVQS. The helical transmembrane segment at 132–147 threads the bilayer; sequence EDSVLLFVIAWTITEI. At 148 to 170 the chain is on the cytoplasmic side; the sequence is IRYSFYTFSLLNHLPYLIKWARY. A helical transmembrane segment spans residues 171-188; that stretch reads TLFIVLYPMGVSGELLTI. Residues tyrosine 177 and glutamate 184 contribute to the active site. At 189–218 the chain is on the lumenal side; sequence YAALPFVRQAGLYSISLPNKYNFSFDYYAF. The tract at residues 199 to 215 is may be involved in interaction with TECR; it reads GLYSISLPNKYNFSFDY. Residue asparagine 210 is glycosylated (N-linked (GlcNAc...) asparagine). The chain crosses the membrane as a helical span at residues 219 to 236; it reads LILIMISYIPIFPQLYFH. The Cytoplasmic segment spans residues 237-255; the sequence is MIHQRRKILSHTEEHKKFE.

It belongs to the very long-chain fatty acids dehydratase HACD family. May interact with enzymes of the ELO family (including ELOVL1); with those enzymes that mediate condensation, the first of the four steps of the reaction cycle responsible for fatty acids elongation, may be part of a larger fatty acids elongase complex. Interacts with BCAP31. Interacts (via the third lumenal loop) with TECR.

It localises to the endoplasmic reticulum membrane. It catalyses the reaction a very-long-chain (3R)-3-hydroxyacyl-CoA = a very-long-chain (2E)-enoyl-CoA + H2O. The enzyme catalyses (3R)-hydroxyhexadecanoyl-CoA = (2E)-hexadecenoyl-CoA + H2O. It carries out the reaction (3R)-hydroxyoctadecanoyl-CoA = (2E)-octadecenoyl-CoA + H2O. The catalysed reaction is (3R)-hydroxyeicosanoyl-CoA = (2E)-eicosenoyl-CoA + H2O. It catalyses the reaction (3R)-hydroxydocosanoyl-CoA = (2E)-docosenoyl-CoA + H2O. The enzyme catalyses (3R)-hydroxytetracosanoyl-CoA = (2E)-tetracosenoyl-CoA + H2O. It carries out the reaction (3R)-hydroxyhexacosanoyl-CoA = (2E)-hexacosenoyl-CoA + H2O. Its pathway is lipid metabolism; fatty acid biosynthesis. Catalyzes the third of the very long-chain fatty acids (VLCFA) elongation four-step cycle (condensation, reduction, dehydration, and reduction). This endoplasmic reticulum-elongation process is characterized by the addition of two carbons to the lipid chain through each cycle. This enzyme catalyzes the dehydration of the 3-hydroxyacyl-CoA intermediate into trans-2,3-enoyl-CoA, within each cycle of elongation. Therefore, it participates in the production of various VLCFAs involved in multiple biological processes as precursors of membrane lipids and lipid mediators. In Pongo abelii (Sumatran orangutan), this protein is Very-long-chain (3R)-3-hydroxyacyl-CoA dehydratase 2.